Consider the following 377-residue polypeptide: Succinyl-diaminopimelate desuccinylase (377 aa).

H66 serves as a coordination point for Zn(2+). D68 is an active-site residue. Zn(2+) is bound at residue D99. The Proton acceptor role is filled by E133. Zn(2+) contacts are provided by E134, E163, and H349.

It belongs to the peptidase M20A family. DapE subfamily. In terms of assembly, homodimer. Zn(2+) serves as cofactor. The cofactor is Co(2+).

It catalyses the reaction N-succinyl-(2S,6S)-2,6-diaminopimelate + H2O = (2S,6S)-2,6-diaminopimelate + succinate. Its pathway is amino-acid biosynthesis; L-lysine biosynthesis via DAP pathway; LL-2,6-diaminopimelate from (S)-tetrahydrodipicolinate (succinylase route): step 3/3. Catalyzes the hydrolysis of N-succinyl-L,L-diaminopimelic acid (SDAP), forming succinate and LL-2,6-diaminopimelate (DAP), an intermediate involved in the bacterial biosynthesis of lysine and meso-diaminopimelic acid, an essential component of bacterial cell walls. In Legionella pneumophila (strain Corby), this protein is Succinyl-diaminopimelate desuccinylase.